The primary structure comprises 1358 residues: Tenascin-R (1358 aa).

An N-terminal signal peptide occupies residues 1–31; that stretch reads MGIDGETVVLKNMLIGVNLILLGSMLKPSEC. The tract at residues 37-58 is disordered; it reads TERAQRQTVEEEGGASSYNTSS. Asn-55 is a glycosylation site (N-linked (GlcNAc...) asparagine). A coiled-coil region spans residues 127 to 157; the sequence is CASSSQVLQELLSRIEMLEREVSLLRDQCNT. O-linked (Xyl...) (chondroitin sulfate) serine glycosylation is present at Ser-176. 2 N-linked (GlcNAc...) asparagine glycosylation sites follow: Asn-180 and Asn-198. 3 EGF-like domains span residues 188–199, 219–230, and 250–261; these read CICNEGWFGKNC, CICDSEYSGDDC, and CVCEEPYTGEDC. Residue Ser-271 is glycosylated (O-linked (Xyl...) (chondroitin sulfate) serine). A glycan (N-linked (GlcNAc...) asparagine) is linked at Asn-278. The region spanning 281-292 is the EGF-like 4 domain; that stretch reads CLCQEGYAGEDC. 2 disulfide bridges follow: Cys-297/Cys-307 and Cys-314/Cys-323. An O-linked (Xyl...) (chondroitin sulfate) serine glycan is attached at Ser-302. The 12-residue stretch at 312–323 folds into the EGF-like 5 domain; sequence CICEEGYQGPDC. 9 consecutive Fibronectin type-III domains span residues 328–420, 421–505, 506–597, 598–687, 688–777, 778–865, 866–955, 956–1042, and 1043–1131; these read PPED…TPQG, LQFK…TVID, GPTQ…IDAP, KNLR…TELD, SPRD…FRPI, SHLH…TGID, PPKN…AMDS, PMDL…TLLD, and PPDN…GGRV. N-linked (GlcNAc...) asparagine glycans are attached at residues Asn-392, Asn-470, and Asn-581. Position 724 is a phosphoserine (Ser-724). Asn-791, Asn-869, Asn-874, Asn-1036, Asn-1046, and Asn-1261 each carry an N-linked (GlcNAc...) asparagine glycan. The Fibrinogen C-terminal domain maps to 1129–1344; the sequence is GRVFSHPQDC…FVEMKMRPYI (216 aa).

Belongs to the tenascin family. As to quaternary structure, interacts with BCAN and ACAN in a calcium-dependent manner. Interacts with SCN2B, PTPRZ1, and CSPG3. Forms oligomers. Isoforms 1 and 2 form respectively trimeric (tribrachion) and dimeric kink-armed rodlike structures, which are linked by disulfide bridges. Interacts with CNTN1, TNC and FN1. Post-translationally, contains N-linked oligosaccharides with a sulfated carbohydrate structures. Contains N-linked oligosaccharides, O-linked sialylated structures and O-linked chondroitin sulfate glycosaminoglycans. As to expression, brain-specific.

It is found in the secreted. The protein resides in the extracellular space. The protein localises to the extracellular matrix. In terms of biological role, neural extracellular matrix (ECM) protein involved in interactions with different cells and matrix components. Theses interactions can influence cellular behavior by either evoking a stable adhesion and differentiation, or repulsion and inhibition of neurite growth. Binding to cell surface gangliosides inhibits RGD-dependent integrin-mediated cell adhesion and results in an inhibition of PTK2/FAK1 (FAK) phosphorylation and cell detachment. Binding to membrane surface sulfatides results in a oligodendrocyte adhesion and differentiation. Interaction with CNTN1 induces a repulsion of neurons and an inhibition of neurite outgrowth. Interacts with SCN2B may play a crucial role in clustering and regulation of activity of sodium channels at nodes of Ranvier. TNR-linked chondroitin sulfate glycosaminoglycans are involved in the interaction with FN1 and mediates inhibition of cell adhesion and neurite outgrowth. The highly regulated addition of sulfated carbohydrate structure may modulate the adhesive properties of TNR over the course of development and during synapse maintenance. In Mus musculus (Mouse), this protein is Tenascin-R (Tnr).